The chain runs to 84 residues: MAKSNKRRPAPEKPVKARKCVFCAKKDQAIDYKDTALLRTYISERGKIRARRVTGNCVQHQRDIAIAVKNAREVALLPFTSSAR.

It belongs to the bacterial ribosomal protein bS18 family. In terms of assembly, part of the 30S ribosomal subunit. Forms a tight heterodimer with protein bS6.

In terms of biological role, binds as a heterodimer with protein bS6 to the central domain of the 16S rRNA, where it helps stabilize the platform of the 30S subunit. In Mycolicibacterium paratuberculosis (strain ATCC BAA-968 / K-10) (Mycobacterium paratuberculosis), this protein is Small ribosomal subunit protein bS18A.